Consider the following 733-residue polypeptide: Oligopeptide transporter 8 (733 aa).

A run of 14 helical transmembrane segments spans residues 42–62 (MWVL…FFWY), 66–86 (PLTI…HLMA), 115–135 (VLIT…HILS), 147–167 (FLPA…WAGL), 209–229 (FFVI…YLFT), 244–264 (SILV…SFGL), 281–301 (FFAS…ITPL), 357–377 (FAVT…HVLI), 413–433 (LWWF…ICIY), 442–462 (WWGA…VGVI), 531–551 (VGTL…MAEI), 596–616 (YSNI…VYLA), 644–664 (ASAV…HFVF), and 677–697 (VLSG…FLAL).

Belongs to the oligopeptide OPT transporter (TC 2.A.67.1) family.

The protein resides in the membrane. In terms of biological role, may be involved in the translocation of tetra- and pentapeptides across the cellular membrane in an energy-dependent manner. This is Oligopeptide transporter 8 (OPT8) from Arabidopsis thaliana (Mouse-ear cress).